The following is a 124-amino-acid chain: Small ribosomal subunit protein uS12 (124 aa).

Asp89 bears the 3-methylthioaspartic acid mark. Positions 104–124 (ALGVEDRKRGRSKYGAKRPKA) are disordered. A compositionally biased stretch (basic residues) spans 112–124 (RGRSKYGAKRPKA).

Belongs to the universal ribosomal protein uS12 family. In terms of assembly, part of the 30S ribosomal subunit. Contacts proteins S8 and S17. May interact with IF1 in the 30S initiation complex.

Functionally, with S4 and S5 plays an important role in translational accuracy. Interacts with and stabilizes bases of the 16S rRNA that are involved in tRNA selection in the A site and with the mRNA backbone. Located at the interface of the 30S and 50S subunits, it traverses the body of the 30S subunit contacting proteins on the other side and probably holding the rRNA structure together. The combined cluster of proteins S8, S12 and S17 appears to hold together the shoulder and platform of the 30S subunit. The chain is Small ribosomal subunit protein uS12 from Treponema denticola (strain ATCC 35405 / DSM 14222 / CIP 103919 / JCM 8153 / KCTC 15104).